The primary structure comprises 855 residues: Pre-mRNA-splicing factor SYF1 (855 aa).

HAT repeat units follow at residues 15 to 47 (LVFE…FKQG), 48 to 80 (APKP…ARRA), 90 to 122 (PAYE…FLMD), 124 to 158 (GRVT…FLRS), 160 to 192 (PLPE…SSDR), 198 to 230 (QRLA…LISQ), 235 to 268 (VQSL…YYIR), 270 to 305 (GHFE…FEES), and 369 to 407 (GRPR…FYED). An N6-acetyllysine modification is found at lysine 420. HAT repeat units lie at residues 498–530 (GTFQ…FLEE), 532–566 (KYFE…KFIS), 571–605 (RKLE…LEEE), 643–677 (YGVT…MECK), and 679–713 (GEID…FEVR). Positions 808 to 855 (AELAQQANPEEIQLGEDEDEDEMDLEPNEVRLEQQSVPAAVFGSLKED) are disordered. The segment covering 820–834 (QLGEDEDEDEMDLEP) has biased composition (acidic residues). A Phosphoserine modification is found at serine 851.

The protein belongs to the crooked-neck family. In terms of assembly, associates with RNA polymerase II, the TCR-specific proteins CKN1/CSA and ERCC6/CSB, and XPA. Identified in the spliceosome C complex. Component of the XAB2 complex, a multimeric protein complex composed of XAB2, PRPF19, AQR, ZNF830, ISY1, and PPIE. Identified in a pentameric intron-binding (IB) complex composed of AQR, XAB2, ISY1, ZNF830 and PPIE that is incorporated into the spliceosome as a preassembled complex. The IB complex does not contain PRPF19.

It is found in the nucleus. In terms of biological role, involved in pre-mRNA splicing as component of the spliceosome. Involved in transcription-coupled repair (TCR), transcription and pre-mRNA splicing. The sequence is that of Pre-mRNA-splicing factor SYF1 (Xab2) from Mus musculus (Mouse).